We begin with the raw amino-acid sequence, 227 residues long: Urease accessory protein UreF (227 aa).

Belongs to the UreF family. As to quaternary structure, ureD, UreF and UreG form a complex that acts as a GTP-hydrolysis-dependent molecular chaperone, activating the urease apoprotein by helping to assemble the nickel containing metallocenter of UreC. The UreE protein probably delivers the nickel.

Its subcellular location is the cytoplasm. Functionally, required for maturation of urease via the functional incorporation of the urease nickel metallocenter. The sequence is that of Urease accessory protein UreF from Methylobacillus flagellatus (strain ATCC 51484 / DSM 6875 / VKM B-1610 / KT).